Consider the following 529-residue polypeptide: MFKDQLAKEVNSRRTFAIISHPDAGKTTMTEKLLLWGKAIQVAGMVKSRKSDRSATSDWMEMEKERGISITTSVMQFPYKQHTINLLDTPGHEDFSEDTYRTLTAVDSALMVIDGAKGVEERTIKLMEVCRMRDTPIISFVNKMDREIREPLELLDEIENVLNIRCVPITWPLGMGRDFAGVYNLLENKLYLYKAGFGSTITDIEVRDGYDHADVREKVGELAWASFEESLELVQMANEPLDRELFLQGKQTPVLFGTALGNFAVDHVLDAFINWAPEPKAHPAQERNVDATEEGFSGFVFKIQANMDPKHRDRIAFMRICSGKYEKGLKMNHVRIGKDVRISDALTFLAGEREHLEEAWPGDIIGLHNHGTIQIGDTFTSGEKLHFTGIPHFAPEMFRRVRLRDPLKSKQLQKGLKELSEEGATQVFMPQISNDLIVGAVGVLQFDVVAYRLKEEYKVDCIYEPISVNTVRWVHCDDEKIFNEFKKKAHDQLSVDGGGHLTYLAPSRVNLQLMQERWPDIQFRNTREH.

The tr-type G domain occupies 11-280 (NSRRTFAIIS…AFINWAPEPK (270 aa)). GTP contacts are provided by residues 20–27 (SHPDAGKT), 88–92 (DTPGH), and 142–145 (NKMD).

It belongs to the TRAFAC class translation factor GTPase superfamily. Classic translation factor GTPase family. PrfC subfamily.

It is found in the cytoplasm. Increases the formation of ribosomal termination complexes and stimulates activities of RF-1 and RF-2. It binds guanine nucleotides and has strong preference for UGA stop codons. It may interact directly with the ribosome. The stimulation of RF-1 and RF-2 is significantly reduced by GTP and GDP, but not by GMP. This is Peptide chain release factor 3 from Acinetobacter baylyi (strain ATCC 33305 / BD413 / ADP1).